A 470-amino-acid chain; its full sequence is Putative multidrug resistance protein MdtD (470 aa).

Residues 1–11 are Periplasmic-facing; the sequence is MTELPDNTRWQ. The helical transmembrane segment at 12-32 threads the bilayer; it reads LWIVALGFFMQSLDTTIVNTA. Residues 33–48 are Cytoplasmic-facing; sequence LPSMAKSLGESPLHMH. The chain crosses the membrane as a helical span at residues 49-69; it reads MVVVSYVLTVAVMLPASGWLA. Residues 70–76 lie on the Periplasmic side of the membrane; sequence DKIGVRN. The helical transmembrane segment at 77-97 threads the bilayer; it reads IFFAAIVLFTLGSLFCALSGT. The Cytoplasmic segment spans residues 98–101; it reads LNQL. Residues 102-124 form a helical membrane-spanning segment; the sequence is VLARVLQGVGGAMMVPVGRLTVM. The Periplasmic portion of the chain corresponds to 125-137; that stretch reads KIVPRAQYMAAMT. A helical membrane pass occupies residues 138 to 158; it reads FVTLPGQIGPLLGPALGGVLV. Residues 159 to 164 are Cytoplasmic-facing; the sequence is EYASWH. A helical transmembrane segment spans residues 165 to 185; that stretch reads WIFLINIPVGIVGAMATFMLM. The Periplasmic portion of the chain corresponds to 186 to 196; it reads PNYTIETRRFD. A helical membrane pass occupies residues 197–217; that stretch reads LPGFLLLAIGMAVLTLALDGS. Residues 218 to 221 are Cytoplasmic-facing; sequence KSMG. A helical transmembrane segment spans residues 222-242; the sequence is ISPWTLAGLAAGGAAAILLYL. The Periplasmic portion of the chain corresponds to 243–262; sequence LHAKKNSGALFSLRLFRTPT. A helical membrane pass occupies residues 263-283; sequence FSLGLLGSFAGRIGSGMLPFM. The Cytoplasmic segment spans residues 284-285; sequence TP. Residues 286-306 traverse the membrane as a helical segment; it reads VFLQIGLGFSPFHAGLMMIPM. Topologically, residues 307-341 are periplasmic; it reads VLGSMGMKRIVVQIVNRFGYRRVLVATTLGLALVS. The helical transmembrane segment at 342–362 threads the bilayer; that stretch reads LLFMSVALLGWYYLLPLVLLL. Residues 363–395 lie on the Cytoplasmic side of the membrane; it reads QGMVNSARFSSMNTLTLKDLPDTLASSGNSLLS. The helical transmembrane segment at 396-416 threads the bilayer; that stretch reads MIMQLSMSIGVTIAGMLLGMF. Over 417 to 430 the chain is Periplasmic; that stretch reads GQQHIGIDSSATHH. Residues 431 to 451 traverse the membrane as a helical segment; sequence VFMYTWLCMAVIIALPAIIFA. At 452–470 the chain is on the cytoplasmic side; it reads RVPNDTQQNMVISRRKRSL.

This sequence belongs to the major facilitator superfamily. TCR/Tet family.

The protein localises to the cell inner membrane. This Salmonella heidelberg (strain SL476) protein is Putative multidrug resistance protein MdtD.